A 943-amino-acid polypeptide reads, in one-letter code: Isoleucine--tRNA ligase (943 aa).

Residues 58–68 (PYANGTIHIGH) carry the 'HIGH' region motif. L-isoleucyl-5'-AMP is bound at residue Glu567. Residues 608–612 (KMSKS) carry the 'KMSKS' region motif. Lys611 is a binding site for ATP. 4 residues coordinate Zn(2+): Cys906, Cys909, Cys926, and Cys929.

Belongs to the class-I aminoacyl-tRNA synthetase family. IleS type 1 subfamily. In terms of assembly, monomer. Zn(2+) serves as cofactor.

The protein resides in the cytoplasm. It carries out the reaction tRNA(Ile) + L-isoleucine + ATP = L-isoleucyl-tRNA(Ile) + AMP + diphosphate. In terms of biological role, catalyzes the attachment of isoleucine to tRNA(Ile). As IleRS can inadvertently accommodate and process structurally similar amino acids such as valine, to avoid such errors it has two additional distinct tRNA(Ile)-dependent editing activities. One activity is designated as 'pretransfer' editing and involves the hydrolysis of activated Val-AMP. The other activity is designated 'posttransfer' editing and involves deacylation of mischarged Val-tRNA(Ile). The polypeptide is Isoleucine--tRNA ligase (Pseudomonas syringae pv. tomato (strain ATCC BAA-871 / DC3000)).